The chain runs to 150 residues: MSHLIFNQPSEDKSALEDAGDFTPRFDDRGLITAIVTDAGDGELLMVAHMNAQALALTIQTGTAHYFSRSRGKIWKKGETSGNLQTVKEIRTDCDQDAIWLKVEVAGHDATCHTGRRSCFYRTVTLREGKPMLDIIDDERHFDPQDIYGK.

Mg(2+) is bound at residue Asp-93. Residue Cys-94 coordinates Zn(2+). 2 residues coordinate Mg(2+): Asp-95 and Asp-97. Zn(2+) is bound by residues Cys-112 and Cys-119.

The protein belongs to the PRA-CH family. In terms of assembly, homodimer. The cofactor is Mg(2+). Requires Zn(2+) as cofactor.

The protein localises to the cytoplasm. It carries out the reaction 1-(5-phospho-beta-D-ribosyl)-5'-AMP + H2O = 1-(5-phospho-beta-D-ribosyl)-5-[(5-phospho-beta-D-ribosylamino)methylideneamino]imidazole-4-carboxamide. It functions in the pathway amino-acid biosynthesis; L-histidine biosynthesis; L-histidine from 5-phospho-alpha-D-ribose 1-diphosphate: step 3/9. In terms of biological role, catalyzes the hydrolysis of the adenine ring of phosphoribosyl-AMP. The chain is Phosphoribosyl-AMP cyclohydrolase from Rhizobium etli (strain CIAT 652).